Here is a 94-residue protein sequence, read N- to C-terminus: Putative pterin-4-alpha-carbinolamine dehydratase (94 aa).

Belongs to the pterin-4-alpha-carbinolamine dehydratase family.

The enzyme catalyses (4aS,6R)-4a-hydroxy-L-erythro-5,6,7,8-tetrahydrobiopterin = (6R)-L-erythro-6,7-dihydrobiopterin + H2O. In Chloroflexus aggregans (strain MD-66 / DSM 9485), this protein is Putative pterin-4-alpha-carbinolamine dehydratase.